The primary structure comprises 57 residues: MLNWVVTFLVIALIAGVLGFGGIAGASFEIAKIIFFIALILFVISAVVGFLRGRNRV.

The next 2 helical transmembrane spans lie at Trp4 to Ala24 and Ile30 to Phe50.

The protein belongs to the UPF0391 family.

It is found in the cell membrane. This Nitrobacter winogradskyi (strain ATCC 25391 / DSM 10237 / CIP 104748 / NCIMB 11846 / Nb-255) protein is UPF0391 membrane protein Nwi_2359.